Consider the following 275-residue polypeptide: Putative pyruvate, phosphate dikinase regulatory protein (275 aa).

151–158 contacts ADP; it reads GVSRTSKT.

This sequence belongs to the pyruvate, phosphate/water dikinase regulatory protein family. PDRP subfamily.

It carries out the reaction N(tele)-phospho-L-histidyl/L-threonyl-[pyruvate, phosphate dikinase] + ADP = N(tele)-phospho-L-histidyl/O-phospho-L-threonyl-[pyruvate, phosphate dikinase] + AMP + H(+). The enzyme catalyses N(tele)-phospho-L-histidyl/O-phospho-L-threonyl-[pyruvate, phosphate dikinase] + phosphate + H(+) = N(tele)-phospho-L-histidyl/L-threonyl-[pyruvate, phosphate dikinase] + diphosphate. In terms of biological role, bifunctional serine/threonine kinase and phosphorylase involved in the regulation of the pyruvate, phosphate dikinase (PPDK) by catalyzing its phosphorylation/dephosphorylation. The polypeptide is Putative pyruvate, phosphate dikinase regulatory protein (Rhodospirillum rubrum (strain ATCC 11170 / ATH 1.1.1 / DSM 467 / LMG 4362 / NCIMB 8255 / S1)).